The primary structure comprises 344 residues: MGGLMKKNTLILGIESSCDETAASVVKNGNEIISSVVASQIESHKRFGGVVPEIASRHHVEQITLVIEEALKQANVTMDDLDGIAVTEGPGLVGALLIGVNAAKTLAFMHNLPLVGVHHIAGHIYANRFETEFKFPLLSLVVSGGHTELVLMKADNEFEIIGETRDDAAGEAYDKVARTLGLAYPGGVQIDKLAKDGEDTFHFPRAMMDEGSFDFSFSGLKSSFINTLHNLRQRGEEPNPNDMAASFQASVVDVLVSKTIRAAKQYDVKQLLLAGGVAANQGLRERLIQEVKLELPETELIIPPLALCGDNAAMIAAAGTVSFLQGKRSGFDMNANPGLLLEDI.

Positions 119 and 123 each coordinate Fe cation. Residues 141 to 145 (VVSGG), aspartate 174, glycine 187, aspartate 191, and asparagine 280 contribute to the substrate site. Aspartate 310 is a Fe cation binding site.

This sequence belongs to the KAE1 / TsaD family. Fe(2+) serves as cofactor.

The protein localises to the cytoplasm. It catalyses the reaction L-threonylcarbamoyladenylate + adenosine(37) in tRNA = N(6)-L-threonylcarbamoyladenosine(37) in tRNA + AMP + H(+). Its function is as follows. Required for the formation of a threonylcarbamoyl group on adenosine at position 37 (t(6)A37) in tRNAs that read codons beginning with adenine. Is involved in the transfer of the threonylcarbamoyl moiety of threonylcarbamoyl-AMP (TC-AMP) to the N6 group of A37, together with TsaE and TsaB. TsaD likely plays a direct catalytic role in this reaction. This is tRNA N6-adenosine threonylcarbamoyltransferase from Listeria monocytogenes serotype 4b (strain CLIP80459).